The sequence spans 524 residues: MSTLQGLLDALQHHKLQLLCIGPLVYACVSFIIKIVYRIYFHPLAKFPGPKIAAATHLYEVAWDYFGQGAYLYEIQRMHEKYGPIVRINPIELSVNDPEFYNVLYVGGSVRKTNALPSFGDGMDFNGSHGMTVDHDHHRLRRKPMEPFFSKGSIARLEDRLQELTVTLVQRLHEYRGTGRVLRLDHVFAAMAGDVVNVLCIANPTMSFLRHSDFNPYWYELFHTLIRSMPLFMNFPWVIKIVRLIPTSLLEKLDPRSQMFRDWRMMSVNHIIDAKQRKERGLIFVNEEDKMKCETLFDHIVNSDLPEAELSVERLASEAQVVMGAGTVTTARTMDFLAVRILLNDSVCQRLRDELREPMKDFPERIPSYAELEKLPWLQACIKEALRLSPGLTHRLPRVSPHEELIYKDWVIPRNTPVGMSALFMHMDPLVYKDPTEYRPERWLEDVTPEMHRNYVPFTKGSRRCLGVELSYAEITLVFASLFGPKGPKLKLYETNESDGDPACHFLLPLPRLDSKGIRVTVEA.

Residues 16–36 traverse the membrane as a helical segment; the sequence is LQLLCIGPLVYACVSFIIKIV. 2 N-linked (GlcNAc...) asparagine glycosylation sites follow: N126 and N344. Residue C465 participates in heme binding. N-linked (GlcNAc...) asparagine glycosylation is present at N496.

The protein belongs to the cytochrome P450 family. Requires heme as cofactor.

It is found in the membrane. It functions in the pathway mycotoxin biosynthesis. Its function is as follows. Cytochrome P450 monooxygenase; part of the 2 gene clusters that mediate the biosynthesis of fusicoccins, diterpene glucosides that display phytohormone-like activity and function as potent activators of plasma membrane H(+)-ATPases in plants by modifying 14-3-3 proteins and cause the plant disease constriction canker. The first step in the pathway is performed by the fusicoccadiene synthase PaFS that possesses both prenyl transferase and terpene cyclase activity, converting isopentenyl diphosphate and dimethylallyl diphosphate into geranylgeranyl diphosphate (GGDP) and successively converting GGDP into fusicocca-2,10(14)-diene, a precursor for fusicoccin H. The second step is the oxidation at the C-8 position by the cytochrome P450 monooxygenase PaP450-2 to yield fusicocca-2,10(14)-diene-8-beta-ol. The cytochrome P450 monooxygenase PaP450-1 then catalyzes the hydroxylation at the C-16 position to produce fusicocca-2,10(14)-diene-8-beta,16-diol. The dioxygenase fc-dox then catalyzes the 16-oxydation of fusicocca-2,10(14)-diene-8-beta,16-diol to yield an aldehyde (8-beta-hydroxyfusicocca-1,10(14)-dien-16-al). The short-chain dehydrogenase/reductase fc-sdr catalyzes the reduction of the aldehyde to yield fusicocca-1,10(14)-diene-8-beta,16-diol. The next step is the hydroxylation at C-9 performed by the cytochrome P450 monooxygenase PaP450-3 that leads to fusicoccin H aglycon which is glycosylated to fusicoccin H by the O-glycosyltransferase PaGT. Hydroxylation at C-12 by the cytochrome P450 monooxygenase PaP450-4 leads then to the production of fusicoccin Q and is followed by methylation by the O-methyltransferase PaMT to yield fusicoccin P. Fusicoccin P is further converted to fusicoccin J via prenylation by the O-glucose prenyltransferase PaPT. Cytochrome P450 monooxygenase PaP450-5 then performs hydroxylation at C-19 to yield dideacetyl-fusicoccin A which is acetylated to 3'-O-deacetyl-fusicoccin A by the O-acetyltransferase PaAT-2. Finally, a another acetylation by the O-acetyltransferase PaAT-1 yields fusicoccin A. The protein is Fusicoccadiene C-8 hydroxylase of Phomopsis amygdali (Fusicoccum amygdali).